The primary structure comprises 145 residues: UPF0260 protein VC_1058 (145 aa).

Belongs to the UPF0260 family.

In Vibrio cholerae serotype O1 (strain ATCC 39315 / El Tor Inaba N16961), this protein is UPF0260 protein VC_1058.